Here is a 347-residue protein sequence, read N- to C-terminus: Heat-inducible transcription repressor HrcA (347 aa).

Belongs to the HrcA family.

Its function is as follows. Negative regulator of class I heat shock genes (grpE-dnaK-dnaJ and groELS operons). Prevents heat-shock induction of these operons. This Lactobacillus delbrueckii subsp. bulgaricus (strain ATCC BAA-365 / Lb-18) protein is Heat-inducible transcription repressor HrcA.